Consider the following 325-residue polypeptide: Peroxidase 68 (325 aa).

The N-terminal stretch at 1–28 (MECYEQSRQRAAFVVLLFIVMLGSQAQA) is a signal peptide. A Pyrrolidone carboxylic acid modification is found at glutamine 29. 4 disulfide bridges follow: cysteine 39–cysteine 119, cysteine 72–cysteine 77, cysteine 125–cysteine 321, and cysteine 205–cysteine 230. Residue histidine 70 is the Proton acceptor of the active site. The Ca(2+) site is built by aspartate 71, valine 74, glycine 76, aspartate 78, and serine 80. Asparagine 99 is a glycosylation site (N-linked (GlcNAc...) asparagine). Residue proline 168 coordinates substrate. Histidine 198 is a heme b binding site. A Ca(2+)-binding site is contributed by threonine 199. Asparagine 214 is a glycosylation site (N-linked (GlcNAc...) asparagine). 3 residues coordinate Ca(2+): aspartate 245, threonine 248, and aspartate 253.

The protein belongs to the peroxidase family. Classical plant (class III) peroxidase subfamily. Heme b is required as a cofactor. The cofactor is Ca(2+).

The protein localises to the secreted. The enzyme catalyses 2 a phenolic donor + H2O2 = 2 a phenolic radical donor + 2 H2O. Functionally, removal of H(2)O(2), oxidation of toxic reductants, biosynthesis and degradation of lignin, suberization, auxin catabolism, response to environmental stresses such as wounding, pathogen attack and oxidative stress. These functions might be dependent on each isozyme/isoform in each plant tissue. This Arabidopsis thaliana (Mouse-ear cress) protein is Peroxidase 68 (PER68).